The chain runs to 777 residues: Homoaconitase, mitochondrial (777 aa).

The N-terminal 35 residues, Met-1 to Ser-35, are a transit peptide targeting the mitochondrion. The segment at Leu-47 to Pro-74 is disordered. The span at Glu-52–Pro-74 shows a compositional bias: low complexity. [4Fe-4S] cluster-binding residues include Cys-398, Cys-466, and Cys-469.

The protein belongs to the aconitase/IPM isomerase family. [4Fe-4S] cluster is required as a cofactor.

It is found in the mitochondrion. The catalysed reaction is (2R,3S)-homoisocitrate = cis-homoaconitate + H2O. Its pathway is amino-acid biosynthesis; L-lysine biosynthesis via AAA pathway; L-alpha-aminoadipate from 2-oxoglutarate: step 3/5. In terms of biological role, catalyzes the reversible hydration of cis-homoaconitate to (2R,3S)-homoisocitrate, a step in the alpha-aminoadipate pathway for lysine biosynthesis. The polypeptide is Homoaconitase, mitochondrial (lys4) (Aspergillus fumigatus (strain ATCC MYA-4609 / CBS 101355 / FGSC A1100 / Af293) (Neosartorya fumigata)).